Here is a 249-residue protein sequence, read N- to C-terminus: Mediator of RNA polymerase II transcription subunit 8 (249 aa).

The stretch at 1–26 forms a coiled coil; sequence MQREEKQLDMLLEAVLNRLNDLKHSI. Polar residues-rich tracts occupy residues 215–224 and 235–249; these read SPMSAVSPSG and IKTNIKSANQVHPYR. Positions 215–249 are disordered; sequence SPMSAVSPSGNAPMGKMPSGIKTNIKSANQVHPYR.

Belongs to the Mediator complex subunit 8 family. As to quaternary structure, component of the Mediator complex.

It is found in the nucleus. Its function is as follows. Component of the Mediator complex, a coactivator involved in the regulated transcription of nearly all RNA polymerase II-dependent genes. Mediator functions as a bridge to convey information from gene-specific regulatory proteins to the basal RNA polymerase II transcription machinery. Mediator is recruited to promoters by direct interactions with regulatory proteins and serves as a scaffold for the assembly of a functional preinitiation complex with RNA polymerase II and the general transcription factors. The chain is Mediator of RNA polymerase II transcription subunit 8 (MED8) from Anopheles gambiae (African malaria mosquito).